A 583-amino-acid polypeptide reads, in one-letter code: Proteasome-associated ATPase (583 aa).

Positions 2–90 (ASREDRDAAN…REEVDRLAQP (89 aa)) form a coiled coil. 271–276 (GCGKTL) serves as a coordination point for ATP. The interval 582–583 (YL) is docks into pockets in the proteasome alpha-ring.

This sequence belongs to the AAA ATPase family. As to quaternary structure, homohexamer. Assembles into a hexameric ring structure that caps the 20S proteasome core. Strongly interacts with the prokaryotic ubiquitin-like protein Pup through a hydrophobic interface; the interacting region of ARC lies in its N-terminal coiled-coil domain. There is one Pup binding site per ARC hexamer ring. Upon ATP-binding, the C-terminus of ARC interacts with the alpha-rings of the proteasome core, possibly by binding to the intersubunit pockets.

It functions in the pathway protein degradation; proteasomal Pup-dependent pathway. ATPase which is responsible for recognizing, binding, unfolding and translocation of pupylated proteins into the bacterial 20S proteasome core particle. May be essential for opening the gate of the 20S proteasome via an interaction with its C-terminus, thereby allowing substrate entry and access to the site of proteolysis. Thus, the C-termini of the proteasomal ATPase may function like a 'key in a lock' to induce gate opening and therefore regulate proteolysis. The polypeptide is Proteasome-associated ATPase (Acidothermus cellulolyticus (strain ATCC 43068 / DSM 8971 / 11B)).